Consider the following 267-residue polypeptide: MTTGTVDGICYEVHGWPVAGREVVLLSSGLGGSAAFWAPQMKALTERWPVVTYDHRGTGRSVRALPPGPYSVDDMAQDMVKVMDALGLTKAHVVGHAAGGNAGLALALNHPDRLGKLVVVNGWSRPDPHIQRCFDTRIHLLNDTGIKAYVHAQPIFLYPADWISRNHARLMAEEAHHVAGFPPREVMLARINALLAFDIDARLEEIPHRVLVSASADDMLVPMSCSQRLAARLPNADFQQVAWGGHGFTVTDPETFNEGLIKFLEGA.

The region spanning 23–139 (VVLLSSGLGG…IQRCFDTRIH (117 aa)) is the AB hydrolase-1 domain.

The protein belongs to the AB hydrolase superfamily. Hydrolase RutD family.

It carries out the reaction carbamate + 2 H(+) = NH4(+) + CO2. In terms of biological role, involved in pyrimidine catabolism. May facilitate the hydrolysis of carbamate, a reaction that can also occur spontaneously. This chain is Putative carbamate hydrolase RutD, found in Caulobacter segnis (strain ATCC 21756 / DSM 7131 / JCM 7823 / NBRC 15250 / LMG 17158 / TK0059) (Mycoplana segnis).